The following is a 301-amino-acid chain: Probable alpha-L-glutamate ligase (301 aa).

The ATP-grasp domain occupies Leu-104–Glu-287. Residues Lys-141, Glu-178 to Phe-179, Asp-187, and Arg-211 to Asn-213 contribute to the ATP site. Mg(2+)-binding residues include Asp-248, Glu-260, and Asn-262. Mn(2+) is bound by residues Asp-248, Glu-260, and Asn-262.

Belongs to the RimK family. Requires Mg(2+) as cofactor. It depends on Mn(2+) as a cofactor.

This is Probable alpha-L-glutamate ligase from Thioalkalivibrio sulfidiphilus (strain HL-EbGR7).